The primary structure comprises 542 residues: Chaperonin GroEL 1 (542 aa).

Residues 29-32 (TIGP), 86-90 (DGTTT), G415, 479-481 (NAA), and D495 each bind ATP.

The protein belongs to the chaperonin (HSP60) family. Forms a cylinder of 14 subunits composed of two heptameric rings stacked back-to-back. Interacts with the co-chaperonin GroES.

The protein resides in the cytoplasm. The catalysed reaction is ATP + H2O + a folded polypeptide = ADP + phosphate + an unfolded polypeptide.. Together with its co-chaperonin GroES, plays an essential role in assisting protein folding. The GroEL-GroES system forms a nano-cage that allows encapsulation of the non-native substrate proteins and provides a physical environment optimized to promote and accelerate protein folding. This Streptomyces avermitilis (strain ATCC 31267 / DSM 46492 / JCM 5070 / NBRC 14893 / NCIMB 12804 / NRRL 8165 / MA-4680) protein is Chaperonin GroEL 1.